A 515-amino-acid polypeptide reads, in one-letter code: Maturase K (515 aa).

The protein belongs to the intron maturase 2 family. MatK subfamily.

Its subcellular location is the plastid. The protein localises to the chloroplast. Its function is as follows. Usually encoded in the trnK tRNA gene intron. Probably assists in splicing its own and other chloroplast group II introns. This Pinus armandii (Chinese white pine) protein is Maturase K.